A 604-amino-acid polypeptide reads, in one-letter code: Threonine--tRNA ligase (604 aa).

The segment at 210-501 (DHRKIGTEME…LTEHYAGEFP (292 aa)) is catalytic. The Zn(2+) site is built by Cys302, His353, and His478.

The protein belongs to the class-II aminoacyl-tRNA synthetase family. In terms of assembly, homodimer. Zn(2+) serves as cofactor.

The protein localises to the cytoplasm. The catalysed reaction is tRNA(Thr) + L-threonine + ATP = L-threonyl-tRNA(Thr) + AMP + diphosphate + H(+). In terms of biological role, catalyzes the attachment of threonine to tRNA(Thr) in a two-step reaction: L-threonine is first activated by ATP to form Thr-AMP and then transferred to the acceptor end of tRNA(Thr). Also edits incorrectly charged L-seryl-tRNA(Thr). This Sulfurovum sp. (strain NBC37-1) protein is Threonine--tRNA ligase.